The chain runs to 1275 residues: Histone-lysine N-methyltransferase PRDM16 (1275 aa).

A compositionally biased stretch (basic residues) spans 1–10; it reads MRSKARARKL. The interval 1–66 is disordered; that stretch reads MRSKARARKL…SEDFTPKEGS (66 aa). The SET domain maps to 82-211; it reads PDFELRESSI…PGEELLVHVK (130 aa). The C2H2-type 1; degenerate zinc-finger motif lies at 230–255; sequence FRCDECDELFQCRLDLRRHKKYACSS. 5 C2H2-type zinc fingers span residues 282-304, 310-332, 338-361, 367-389, and 395-417; these read HECKDCERMFPNKYSLEQHMIVH, YKCDQCPKAFNWKSNLIRHQMSH, FECENCVKVFTDPSNLQRHIRSQH, HACPDCGKTFATSSGLKQHKHIH, and FICEVCHKSYTQFSNLCRHKRMH. Residues 424–446 form a C2H2-type 7; atypical zinc finger; the sequence is IKCKDCGQMFSTTSSLNKHRRFC. 2 disordered regions span residues 592 to 658 and 789 to 838; these read VKNR…VPPG and APKV…GVSE. The segment covering 610-625 has biased composition (low complexity); the sequence is TTTGTDLDTTTGTGSD. Basic and acidic residues-rich tracts occupy residues 631–648 and 821–835; these read DSDRDKGKDKGKPVESKP and REPRKNHVYGERKPG. Residues 680-1038 form an interaction with CTBP1, CTBP2 and ZNF516 region; the sequence is EEQLLTASGA…KHEHEGAPVS (359 aa). Residues 740–1275 form a mediates interaction with SKI and regulation of TGF-beta signaling region; the sequence is PFTDRALAHN…SGAFNPINHL (536 aa). 3 C2H2-type zinc fingers span residues 951–973, 979–1002, and 1008–1030; these read YTCRYCGKIFPRSANLTRHLRTH, YRCKYCDRSFSISSNLQRHVRNIH, and FKCHLCNRCFGQQTNLDRHLKKH. Disordered stretches follow at residues 1027–1065 and 1084–1169; these read LKKHEHEGAPVSQHSGVLTNHLGTSASSPTSESDNHALL and EMNQ…MGFD. Residues 1038–1058 show a composition bias toward polar residues; sequence SQHSGVLTNHLGTSASSPTSE. Positions 1117–1133 are enriched in acidic residues; that stretch reads DVEEEEEEELEEEDDDS.

Belongs to the PRDM16 family. Interacts with CEBPA, CEBPB and CEBPD; the interaction is direct. Interacts with PPARG and PPARA; controls brown adipocytes. Interacts with CTBP1 and CTBP2; represses the expression of WAT-specific genes. Interacts with PPARGC1A and PPARGC1B; interaction with PPARGC1A or PPARGC1B activates the transcription of BAT-specific gene. Interacts with HDAC1, SKI and SMAD2; the interaction with SKI promotes the recruitment of SMAD3-HDAC1 complex on the promoter of TGF-beta target genes. Interacts with ZNF516; the interaction is direct and may play a role in the transcription of brown adipose tissue-specific gene. Enriched in BAT compared to WAT. Detected in heart, lung, kidney and brain. Expressed in nuclei of cardiomyocytes.

It localises to the nucleus. It is found in the cytoplasm. It carries out the reaction L-lysyl(9)-[histone H3] + S-adenosyl-L-methionine = N(6)-methyl-L-lysyl(9)-[histone H3] + S-adenosyl-L-homocysteine + H(+). Binds DNA and functions as a transcriptional regulator. Displays histone methyltransferase activity and monomethylates 'Lys-9' of histone H3 (H3K9me1) in vitro. Probably catalyzes the monomethylation of free histone H3 in the cytoplasm which is then transported to the nucleus and incorporated into nucleosomes where SUV39H methyltransferases use it as a substrate to catalyze histone H3 'Lys-9' trimethylation. Likely to be one of the primary histone methyltransferases along with MECOM/PRDM3 that direct cytoplasmic H3K9me1 methylation. Functions in the differentiation of brown adipose tissue (BAT) which is specialized in dissipating chemical energy in the form of heat in response to cold or excess feeding while white adipose tissue (WAT) is specialized in the storage of excess energy and the control of systemic metabolism. Together with CEBPB, regulates the differentiation of myoblastic precursors into brown adipose cells. Functions as a repressor of TGF-beta signaling. The protein is Histone-lysine N-methyltransferase PRDM16 of Mus musculus (Mouse).